The following is a 985-amino-acid chain: Bifunctional glutamine synthetase adenylyltransferase/adenylyl-removing enzyme (985 aa).

Residues 1 to 460 (MSLPSLADFP…HFRQVIADPD (460 aa)) form an adenylyl removase region. The adenylyl transferase stretch occupies residues 476–985 (GGEWLPLWEE…MRIWAQMGLS (510 aa)).

It belongs to the GlnE family. It depends on Mg(2+) as a cofactor.

The enzyme catalyses [glutamine synthetase]-O(4)-(5'-adenylyl)-L-tyrosine + phosphate = [glutamine synthetase]-L-tyrosine + ADP. It catalyses the reaction [glutamine synthetase]-L-tyrosine + ATP = [glutamine synthetase]-O(4)-(5'-adenylyl)-L-tyrosine + diphosphate. Its function is as follows. Involved in the regulation of glutamine synthetase GlnA, a key enzyme in the process to assimilate ammonia. When cellular nitrogen levels are high, the C-terminal adenylyl transferase (AT) inactivates GlnA by covalent transfer of an adenylyl group from ATP to specific tyrosine residue of GlnA, thus reducing its activity. Conversely, when nitrogen levels are low, the N-terminal adenylyl removase (AR) activates GlnA by removing the adenylyl group by phosphorolysis, increasing its activity. The regulatory region of GlnE binds the signal transduction protein PII (GlnB) which indicates the nitrogen status of the cell. This Pseudomonas syringae pv. tomato (strain ATCC BAA-871 / DC3000) protein is Bifunctional glutamine synthetase adenylyltransferase/adenylyl-removing enzyme.